A 440-amino-acid chain; its full sequence is Putative purine permease YwdJ (440 aa).

A run of 13 helical transmembrane segments spans residues 3-23 (LVLG…VVPV), 39-59 (LIQS…LKGH), 67-87 (PAGL…TVFA), 96-116 (LQGA…FKVI), 130-150 (VYLL…ILGI), 156-176 (GVDG…FIMT), 188-208 (ILLA…AKPI), 231-251 (GLII…LASM), 283-303 (LLSG…AGFI), 314-334 (FMLG…MNTF), 341-361 (VGFA…FAEF), 374-394 (SIIG…ETAL), and 399-419 (PVFI…AIAA).

The protein belongs to the nucleobase:cation symporter-2 (NCS2) (TC 2.A.40) family.

The protein localises to the cell membrane. The polypeptide is Putative purine permease YwdJ (ywdJ) (Bacillus subtilis (strain 168)).